Reading from the N-terminus, the 129-residue chain is Small ribosomal subunit protein uS11 (129 aa).

Belongs to the universal ribosomal protein uS11 family. In terms of assembly, part of the 30S ribosomal subunit. Interacts with proteins S7 and S18. Binds to IF-3.

Functionally, located on the platform of the 30S subunit, it bridges several disparate RNA helices of the 16S rRNA. Forms part of the Shine-Dalgarno cleft in the 70S ribosome. The protein is Small ribosomal subunit protein uS11 of Rhizobium etli (strain CIAT 652).